Consider the following 391-residue polypeptide: Large ribosomal subunit protein uL3 (391 aa).

The segment covering 1 to 10 (MSHRKFEAPR) has biased composition (basic and acidic residues). The disordered stretch occupies residues 1–41 (MSHRKFEAPRHGSLGFRPRRRTRHHRGRCRSFPKDDPSKKP). The segment covering 17–31 (RPRRRTRHHRGRCRS) has biased composition (basic residues).

The protein belongs to the universal ribosomal protein uL3 family.

The protein resides in the cytoplasm. Functionally, the L3 protein is a component of the large subunit of cytoplasmic ribosomes. In Tetrahymena thermophila, this protein is Large ribosomal subunit protein uL3 (RPL3).